The primary structure comprises 205 residues: Large ribosomal subunit protein uL3c (205 aa).

The interval 130–150 (RGPMSHGSKNHRQPGSIGAGT) is disordered.

The protein belongs to the universal ribosomal protein uL3 family. In terms of assembly, part of the 50S ribosomal subunit.

Its subcellular location is the plastid. It localises to the chloroplast. In terms of biological role, one of the primary rRNA binding proteins, it binds directly near the 3'-end of the 23S rRNA, where it nucleates assembly of the 50S subunit. This chain is Large ribosomal subunit protein uL3c (rpl3), found in Gracilaria tenuistipitata var. liui (Red alga).